A 71-amino-acid polypeptide reads, in one-letter code: Defensin-like protein 124 (71 aa).

Positions 1–25 (MSKPTVIVIFMAILVLGMATKETQG) are cleaved as a signal peptide. 4 cysteine pairs are disulfide-bonded: Cys28–Cys71, Cys40–Cys60, Cys45–Cys65, and Cys49–Cys67.

This sequence belongs to the DEFL family.

The protein resides in the secreted. The polypeptide is Defensin-like protein 124 (LCR16) (Arabidopsis thaliana (Mouse-ear cress)).